The sequence spans 1388 residues: Rho-associated protein kinase 2 (1388 aa).

A disordered region spans residues 1–27 (MSRPPPTGKMPGAPETAPGDGAGASRQ). Residues 92–354 (YDVVKVIGRG…VEEIRQHPFF (263 aa)) enclose the Protein kinase domain. ATP is bound by residues 98–106 (IGRGAFGEV) and lysine 121. Catalysis depends on aspartate 214, which acts as the Proton acceptor. The region spanning 357–425 (DQWHWDNIRE…YRENLLLSDS (69 aa)) is the AGC-kinase C-terminal domain. The segment at 363–784 (NIRETAAPVV…INELLKQKDV (422 aa)) is interaction with PPP1R12A. The interaction with NPM1 stretch occupies residues 373–420 (PELSSDIDSSNFDDIEDDKGDVETFPIPKAFVGNQLPFIGFTYYRENL). Phosphothreonine; by ROCK2 is present on threonine 414. Coiled coils occupy residues 429–1024 (RETD…EKQL) and 1053–1131 (DTDV…IGLD). The REM-1 domain maps to 497 to 573 (ALRQLEREKA…LDETNALLRT (77 aa)). Phosphotyrosine; by SRC is present on tyrosine 722. The RhoBD domain maps to 979 to 1047 (TSDVANLANE…LAEIMNRKEP (69 aa)). Residues 979 to 1047 (TSDVANLANE…LAEIMNRKEP (69 aa)) are RHOA binding. Serine 1137 is modified (phosphoserine). Residues 1150 to 1349 (ESRLEGWLSL…WVSRLVKKIP (200 aa)) form the PH domain. Threonine 1212 carries the post-translational modification Phosphothreonine. The segment at 1260–1315 (GHEFIPTLYHFPTNCEACMKPLWHMFKPPPALECRRCHIKCHKDHMDKKEEIIAPC) adopts a Phorbol-ester/DAG-type zinc-finger fold. Positions 1345-1388 (VKKIPKKPPAPDPFARSSPRTSMKIQQNQSIRRPSRQLAPNKPS) are disordered. Phosphoserine occurs at positions 1362 and 1374. The span at 1362-1376 (SPRTSMKIQQNQSIR) shows a compositional bias: polar residues.

It belongs to the protein kinase superfamily. AGC Ser/Thr protein kinase family. As to quaternary structure, homodimer. Interacts with IRS1. Interacts with RAF1. Interacts with RHOA (activated by GTP), RHOB and RHOC. Interacts with PPP1R12A. Interacts with EP300. Interacts with CHORDC1. Interacts with BRCA2. Interacts with NPM1; this interaction enhances ROCK2 activity. Interacts with SORL1. Interacts with PJVK. Requires Mg(2+) as cofactor. In terms of processing, phosphorylation at Tyr-722 reduces its binding to RHOA and is crucial for focal adhesion dynamics. Dephosphorylation by PTPN11 stimulates its RHOA binding activity. Post-translationally, cleaved by granzyme B during apoptosis. This leads to constitutive activation of the kinase and membrane blebbing. In terms of tissue distribution, expressed in the brain (at protein level).

The protein localises to the cytoplasm. It localises to the cell membrane. Its subcellular location is the nucleus. It is found in the cytoskeleton. The protein resides in the microtubule organizing center. The protein localises to the centrosome. It carries out the reaction L-seryl-[protein] + ATP = O-phospho-L-seryl-[protein] + ADP + H(+). It catalyses the reaction L-threonyl-[protein] + ATP = O-phospho-L-threonyl-[protein] + ADP + H(+). Its activity is regulated as follows. Activated by RHOA binding. Inhibited by Y-27632. Functionally, protein kinase which is a key regulator of actin cytoskeleton and cell polarity. Involved in regulation of smooth muscle contraction, actin cytoskeleton organization, stress fiber and focal adhesion formation, neurite retraction, cell adhesion and motility via phosphorylation of ADD1, BRCA2, CNN1, EZR, DPYSL2, EP300, MSN, MYL9/MLC2, NPM1, RDX, PPP1R12A and VIM. Phosphorylates SORL1 and IRF4. Acts as a negative regulator of VEGF-induced angiogenic endothelial cell activation. Positively regulates the activation of p42/MAPK1-p44/MAPK3 and of p90RSK/RPS6KA1 during myogenic differentiation. Plays an important role in the timely initiation of centrosome duplication. Inhibits keratinocyte terminal differentiation. May regulate closure of the eyelids and ventral body wall through organization of actomyosin bundles. Plays a critical role in the regulation of spine and synaptic properties in the hippocampus. Plays an important role in generating the circadian rhythm of the aortic myofilament Ca(2+) sensitivity and vascular contractility by modulating the myosin light chain phosphorylation. The protein is Rho-associated protein kinase 2 (ROCK2) of Homo sapiens (Human).